The primary structure comprises 253 residues: Triosephosphate isomerase, cytosolic (253 aa).

Substrate is bound by residues N10 and K12. The active-site Electrophile is the H96. E166 serves as the catalytic Proton acceptor.

The protein belongs to the triosephosphate isomerase family. As to quaternary structure, homodimer.

The protein localises to the cytoplasm. It carries out the reaction D-glyceraldehyde 3-phosphate = dihydroxyacetone phosphate. The protein operates within carbohydrate biosynthesis; gluconeogenesis. Its pathway is carbohydrate degradation; glycolysis; D-glyceraldehyde 3-phosphate from glycerone phosphate: step 1/1. In Zea mays (Maize), this protein is Triosephosphate isomerase, cytosolic.